We begin with the raw amino-acid sequence, 300 residues long: UDP-N-acetylenolpyruvoylglucosamine reductase (300 aa).

The FAD-binding PCMH-type domain occupies Lys-30–Gly-194. The active site involves Arg-174. The Proton donor role is filled by Ser-223. Glu-293 is a catalytic residue.

It belongs to the MurB family. The cofactor is FAD.

The protein resides in the cytoplasm. It catalyses the reaction UDP-N-acetyl-alpha-D-muramate + NADP(+) = UDP-N-acetyl-3-O-(1-carboxyvinyl)-alpha-D-glucosamine + NADPH + H(+). The protein operates within cell wall biogenesis; peptidoglycan biosynthesis. Its function is as follows. Cell wall formation. In Geotalea uraniireducens (strain Rf4) (Geobacter uraniireducens), this protein is UDP-N-acetylenolpyruvoylglucosamine reductase.